A 768-amino-acid chain; its full sequence is Cullin-3 (768 aa).

The residue at position 2 (Ser-2) is an N-acetylserine. Residues 2–41 (SNLSKGTGSRKDTKMRIRAFPMTMDEKYVNSIWDLLKNAI) form an interaction with KLHL18 region. A Phosphoserine modification is found at Ser-585. Positions 677 to 698 (VAAKQGESDPERKETRQKVDDD) are disordered. The segment covering 682 to 698 (GESDPERKETRQKVDDD) has biased composition (basic and acidic residues). The Cullin neddylation domain maps to 698 to 760 (DRKHEIEAAI…REYLARTPED (63 aa)). A Glycyl lysine isopeptide (Lys-Gly) (interchain with G-Cter in NEDD8) cross-link involves residue Lys-712.

Belongs to the cullin family. As to quaternary structure, forms neddylation-dependent homodimers. Component of multiple BCR (BTB-CUL3-RBX1) E3 ubiquitin-protein ligase complexes formed of CUL3, RBX1 and a variable BTB domain-containing protein acting as both, adapter to cullin and substrate recognition subunit. The BCR complex may be active as a heterodimeric complex, in which NEDD8, covalently attached to one CUL3 molecule, binds to the C-terminus of a second CUL3 molecule. Interacts with RBX1, RNF7, CYCE and TIP120A/CAND1. Part of the BCR(SPOP) containing SPOP, and of BCR containing homodimeric SPOPL or the heterodimer formed by SPOP and SPOPL. Part of the probable BCR(KLHL9-KLHL13) complex with BTB domain proteins KLHL9 and KLHL13. Part of the BCR(KLHL41) complex containing KLHL41. Component of the BCR(KLHL12) E3 ubiquitin ligase complex, at least composed of CUL3 and KLHL12 and RBX1. Component of the BCR(KLHL3) E3 ubiquitin ligase complex, at least composed of CUL3 and KLHL3 and RBX1. Part of the BCR(ENC1) complex containing ENC1. Part of a complex consisting of BMI1/PCGF4, CUL3 and SPOP. Part of a complex consisting of BRMS1, CUL3 and SPOP. Component of the BCR(KLHL21) E3 ubiquitin ligase complex, at least composed of CUL3, KLHL21 and RBX1. Component of the BCR(KLHL22) E3 ubiquitin ligase complex, at least composed of CUL3, KLHL22 and RBX1. Component of the BCR(KLHL25) E3 ubiquitin ligase complex, at least composed of CUL3, KLHL25 and RBX1. Part of a complex consisting of MACROH2A1, CUL3 and SPOP. Component of the BCR(KLHL42) E3 ubiquitin ligase complex, at least composed of CUL3 and KLHL42. Component of the BCR(KBTBD8) E3 ubiquitin ligase complex, at least composed of CUL3, KBTBD8 and RBX1. Interacts with KLHL42 (via the BTB domain). Interacts with KATNA1; the interaction is enhanced by KLHL42. Interacts with KCTD5, KLHL9, KLHL11, KLHL13, GAN, ZBTB16, KLHL3, KLHL15, KLHL20, KLHL36, GMCL2, BTBD1. Part of a complex that contains CUL3, RBX1 and GAN. Interacts (via BTB domain) with KLHL17; the interaction regulates surface GRIK2 expression. Interacts with KCTD7. Part of the BCR(GAN) complex containing GAN. Part of the BCR(KEAP1) complex containing KEAP1. vInteracts with KLHL10. Interacts with KAT5 and ATF2. Interacts with KCTD17 in the BCR(KCTD17) E3 ubiquitin ligase complex, at least composed of CUL3, KCTD17 and RBX1. Interacts (when neddylated) with ARIH1; leading to activate the E3 ligase activity of ARIH1. Interacts with COPS9. Interacts with PPP2R5B; this interaction is indirect and mediated through KLHL15-binding and leads to PPP2R5B proteasomal degradation. Interacts with RBBP8/CtIP; this interaction is indirect and mediated through KLHL15-binding and leads to RBBP8 proteasomal degradation. Interacts with KLHL24 in the BCR(KLHL24) E3 ubiquitin ligase complex, composed of CUL3, RBX1 and KLHL24. Interacts with RHOBTB2. Interacts (via BTB domain) with KLHL17; the interaction regulates surface GRIK2 expression. Interacts with AURKA and KLHL18 (via BTB domain). Interacts (unneddylated form) with DCUN1D1, DCUN1D2, DCUN1D3, DCUN1D4 and DCUN1D5; these interactions promote the cullin neddylation. Component of a BCR3 (BTB-CUL3-RBX1) E3 ubiquitin ligase complex, also named Cul3-RING ubiquitin ligase complex CUL3(KBTBD6/7), composed of CUL3, RBX1, KBTBD6 and KBTBD7. Component of the BCR(KBTBD2) E3 ubiquitin ligase complex, at least composed of CUL3, KBTBD2 and RBX1. Interacts with KBTBD2 (via the BTB domain). Component of the BCR(KBTBD4) E3 ubiquitin ligase complex, at least composed of CUL3, KBTBD4 and RBX1. Neddylated. Attachment of NEDD8 is required for the E3 ubiquitin-protein ligase activity of the BCR complex. Deneddylated via its interaction with the COP9 signalosome (CSN) complex.

It localises to the nucleus. The protein localises to the golgi apparatus. It is found in the cell projection. Its subcellular location is the cilium. The protein resides in the flagellum. It localises to the cytoplasm. The protein localises to the cytoskeleton. It is found in the spindle. Its subcellular location is the microtubule organizing center. The protein resides in the centrosome. It localises to the spindle pole. It participates in protein modification; protein ubiquitination. Core component of multiple cullin-RING-based BCR (BTB-CUL3-RBX1) E3 ubiquitin-protein ligase complexes which mediate the ubiquitination and subsequent proteasomal degradation of target proteins. BCR complexes and ARIH1 collaborate in tandem to mediate ubiquitination of target proteins. As a scaffold protein may contribute to catalysis through positioning of the substrate and the ubiquitin-conjugating enzyme. The E3 ubiquitin-protein ligase activity of the complex is dependent on the neddylation of the cullin subunit and is inhibited by the association of the deneddylated cullin subunit with TIP120A/CAND1. The functional specificity of the BCR complex depends on the BTB domain-containing protein as the substrate recognition component. BCR(KLHL42) is involved in ubiquitination of KATNA1. BCR(SPOP) is involved in ubiquitination of BMI1/PCGF4, BRMS1, MACROH2A1 and DAXX, GLI2 and GLI3. Can also form a cullin-RING-based BCR (BTB-CUL3-RBX1) E3 ubiquitin-protein ligase complex containing homodimeric SPOPL or the heterodimer formed by SPOP and SPOPL; these complexes have lower ubiquitin ligase activity. BCR(KLHL9-KLHL13) controls the dynamic behavior of AURKB on mitotic chromosomes and thereby coordinates faithful mitotic progression and completion of cytokinesis. BCR(KLHL12) is involved in ER-Golgi transport by regulating the size of COPII coats, thereby playing a key role in collagen export, which is required for embryonic stem (ES) cells division: BCR(KLHL12) acts by mediating monoubiquitination of SEC31 (SEC31A or SEC31B). BCR(KLHL3) acts as a regulator of ion transport in the distal nephron; by mediating ubiquitination of WNK4. The BCR(KLHL20) E3 ubiquitin ligase complex is involved in interferon response and anterograde Golgi to endosome transport: it mediates both ubiquitination leading to degradation and 'Lys-33'-linked ubiquitination. The BCR(KLHL21) E3 ubiquitin ligase complex regulates localization of the chromosomal passenger complex (CPC) from chromosomes to the spindle midzone in anaphase and mediates the ubiquitination of AURKB. The BCR(KLHL22) ubiquitin ligase complex mediates monoubiquitination of PLK1, leading to PLK1 dissociation from phosphoreceptor proteins and subsequent removal from kinetochores, allowing silencing of the spindle assembly checkpoint (SAC) and chromosome segregation. The BCR(KLHL22) ubiquitin ligase complex is also responsible for the amino acid-stimulated 'Lys-48' polyubiquitination and proteasomal degradation of DEPDC5. Through the degradation of DEPDC5, releases the GATOR1 complex-mediated inhibition of the TORC1 pathway. The BCR(KLHL25) ubiquitin ligase complex is involved in translational homeostasis by mediating ubiquitination and subsequent degradation of hypophosphorylated EIF4EBP1 (4E-BP1). The BCR(KLHL25) ubiquitin ligase complex is also involved in lipid synthesis by mediating ubiquitination and degradation of ACLY. The BCR(KBTBD8) complex acts by mediating monoubiquitination of NOLC1 and TCOF1, leading to remodel the translational program of differentiating cells in favor of neural crest specification. Involved in ubiquitination of cyclin E and of cyclin D1 (in vitro) thus involved in regulation of G1/S transition. Involved in the ubiquitination of KEAP1, ENC1 and KLHL41. In concert with ATF2 and RBX1, promotes degradation of KAT5 thereby attenuating its ability to acetylate and activate ATM. The BCR(KCTD17) E3 ubiquitin ligase complex mediates ubiquitination and degradation of TCHP, a down-regulator of cilium assembly, thereby inducing ciliogenesis. The BCR(KLHL24) E3 ubiquitin ligase complex mediates ubiquitination of KRT14, controls KRT14 levels during keratinocytes differentiation, and is essential for skin integrity. The BCR(KLHL18) E3 ubiquitin ligase complex mediates the ubiquitination of AURKA leading to its activation at the centrosome which is required for initiating mitotic entry. The BCR(KEAP1) E3 ubiquitin ligase complex acts as a key sensor of oxidative and electrophilic stress by mediating ubiquitination and degradation of NFE2L2/NRF2, a transcription factor regulating expression of many cytoprotective genes. As part of the CUL3(KBTBD6/7) E3 ubiquitin ligase complex functions mediates 'Lys-48' ubiquitination and proteasomal degradation of TIAM1. By controlling the ubiquitination of that RAC1 guanine exchange factors (GEF), regulates RAC1 signal transduction and downstream biological processes including the organization of the cytoskeleton, cell migration and cell proliferation. The BCR(KBTBD4) E3 ubiquitin ligase complex targets CoREST corepressor complex components RCOR1, KDM1A/LSD1 and HDAC2 for proteasomal degradation with RCOR1 likely to be the primary target while degradation of KDM1A and HDAC2 is likely due to their association with RCOR1. It also targets RCOR3, MIER2 and MIER3 for proteasomal degradation as well as associated proteins ZNF217 and RREB1 with degradation being dependent on the presence of an ELM2 domain in the target proteins. The BCR(ARMC5) complex mediates premature transcription termination of transcripts that are unfavorably configured for transcriptional elongation by mediating ubiquitination of Pol II subunit POLR2A. Required for 'Lys-63'-linked ubiquitination of large ribosomal subunit protein MRPL12. The chain is Cullin-3 (Cul3) from Rattus norvegicus (Rat).